Consider the following 119-residue polypeptide: Beta-2-microglobulin (119 aa).

Positions 1-20 (MARFVVAALLVLLCLSGLEA) are cleaved as a signal peptide. In terms of domain architecture, Ig-like C1-type spans 25–114 (PKIQVYSRHP…VTFPTPKTVK (90 aa)). Residues Cys45 and Cys100 are joined by a disulfide bond.

This sequence belongs to the beta-2-microglobulin family. Heterodimer of an alpha chain and a beta chain. Beta-2-microglobulin is the beta-chain of major histocompatibility complex class I molecules.

The protein localises to the secreted. In terms of biological role, component of the class I major histocompatibility complex (MHC). Involved in the presentation of peptide antigens to the immune system. This is Beta-2-microglobulin (B2M) from Cebus albifrons (White-fronted capuchin).